The sequence spans 180 residues: Shikimate kinase (180 aa).

14 to 19 (GAGKST) is a binding site for ATP. Residue Ser-18 coordinates Mg(2+). Positions 36, 60, and 82 each coordinate substrate. Arg-120 is an ATP binding site. Arg-139 serves as a coordination point for substrate.

This sequence belongs to the shikimate kinase family. Monomer. Mg(2+) serves as cofactor.

The protein resides in the cytoplasm. It catalyses the reaction shikimate + ATP = 3-phosphoshikimate + ADP + H(+). It functions in the pathway metabolic intermediate biosynthesis; chorismate biosynthesis; chorismate from D-erythrose 4-phosphate and phosphoenolpyruvate: step 5/7. Its function is as follows. Catalyzes the specific phosphorylation of the 3-hydroxyl group of shikimic acid using ATP as a cosubstrate. This Chromohalobacter salexigens (strain ATCC BAA-138 / DSM 3043 / CIP 106854 / NCIMB 13768 / 1H11) protein is Shikimate kinase.